Reading from the N-terminus, the 158-residue chain is MGIEGVLKEGFVTTSVDTLINWSKTGSLWPMTFGLACCAVEMMHAGASRYDIDRFGMLFRPSPRQSDLMIVAGTLCNKMAPALRKVYDQMAEPRWVLSMGSCANGGGYYHYSYSVVRGCDRVVPVDVYVPGCPPTAEALLYGILQLQAKIRRENTIAR.

Cys-37, Cys-38, Cys-102, and Cys-132 together coordinate [4Fe-4S] cluster.

It belongs to the complex I 20 kDa subunit family. As to quaternary structure, NDH-1 is composed of 14 different subunits. Subunits NuoB, C, D, E, F, and G constitute the peripheral sector of the complex. [4Fe-4S] cluster serves as cofactor.

The protein resides in the cell inner membrane. It carries out the reaction a quinone + NADH + 5 H(+)(in) = a quinol + NAD(+) + 4 H(+)(out). NDH-1 shuttles electrons from NADH, via FMN and iron-sulfur (Fe-S) centers, to quinones in the respiratory chain. Couples the redox reaction to proton translocation (for every two electrons transferred, four hydrogen ions are translocated across the cytoplasmic membrane), and thus conserves the redox energy in a proton gradient. This chain is NADH-quinone oxidoreductase subunit B, found in Leptothrix cholodnii (strain ATCC 51168 / LMG 8142 / SP-6) (Leptothrix discophora (strain SP-6)).